The chain runs to 7639 residues: Nonribosomal peptide synthetase 4 (7639 aa).

Residues 244-636 (WQGAMRPDAE…AGRKDAQIKF (393 aa)) form an adenylation 1 region. Residues 776–852 (TFSNGTESQL…ALARHVKEIE (77 aa)) form the Carrier 1 domain. O-(pantetheine 4'-phosphoryl)serine is present on Ser813. The segment at 865–1295 (FELSPIQRLY…EQNLSLLVES (431 aa)) is epimerization 1. The segment at 1337-1767 (VEDIYPCSPM…HLGPRHHQQI (431 aa)) is condensation 1. Residues 1786–2181 (FEEQAILRPE…FGRKDTQVKL (396 aa)) form an adenylation 2 region. The 77-residue stretch at 2313–2389 (APASDMEKQL…DMAQSALPLS (77 aa)) folds into the Carrier 2 domain. Ser2350 carries the O-(pantetheine 4'-phosphoryl)serine modification. The segment at 2426-2852 (VEDIYPCTPL…LISTRDYQSL (427 aa)) is condensation 2. An adenylation 3 region spans residues 2878-3269 (QPLDKLAVCA…QGRKDNQVKI (392 aa)). Residues 3403–3479 (REATETETKL…KLASFVQAVE (77 aa)) form the Carrier 3 domain. Ser3440 carries the post-translational modification O-(pantetheine 4'-phosphoryl)serine. Positions 3491 to 3928 (AFPLSPIQKL…RMTQAKAEPQ (438 aa)) are epimerization 2. The condensation 3 stretch occupies residues 3961–4389 (EAVYPCSPVQ…VSDDCAQQLT (429 aa)). The adenylation 4 stretch occupies residues 4407–4810 (FERNVQSLPH…VSRKDTQIKL (404 aa)). The Carrier 4 domain maps to 4944 to 5020 (APTTMMQRKL…EMATCCGHSE (77 aa)). The residue at position 4981 (Ser4981) is an O-(pantetheine 4'-phosphoryl)serine. The condensation 4 stretch occupies residues 5058–5478 (QDLYPCSSLQ…QFCSEEDLQM (421 aa)). The segment at 5498–5900 (FWQSVATYHD…IGRKDNQVKL (403 aa)) is adenylation 5. The 77-residue stretch at 6039 to 6115 (TDTTFVGQLL…DLVTLIEKEG (77 aa)) folds into the Carrier 5 domain. Position 6076 is an O-(pantetheine 4'-phosphoryl)serine (Ser6076). The interval 6133 to 6567 (FALSPIQQLF…EVLGNMAMEL (435 aa)) is epimerization 3. The condensation 5 stretch occupies residues 6607-7032 (VEDMYPCSPM…EALSHLRVSQ (426 aa)). Residues 7088–7164 (RDKDQVYNKL…TLLNCLRDKS (77 aa)) form the Carrier 6 domain. Ser7125 carries the O-(pantetheine 4'-phosphoryl)serine modification. A condensation 6 region spans residues 7254-7603 (LDGEGPLDVA…SNTEVCFLYR (350 aa)).

The protein belongs to the NRP synthetase family.

It carries out the reaction D-allo-threonine + D-leucine + D-alanine + L-proline + 2 L-leucine + A = fusahexin + AH2 + 6 H2O. Its pathway is secondary metabolite biosynthesis. Its function is as follows. Nonribosomal peptide synthetase; part of the gene cluster that mediates the biosynthesis of the fusahexin, a cyclic hydrophobic hexapeptide with the amino acid sequence cyclo-(D-Ala-L-Leu-D-allo-Thr-L-Pro-D-Leu-L-Leu) that plays an important role in cell surface hydrophobicity. Fusahexin might also play a role in virulence, sensitivity to osmotic stress and oxidative stress. NRPS4 is the only enzyme within the cluster and its 5 catalytic modules are sufficient to produce fusahexin. The modules 1 to 4 incorporate respectively D-alanine, L-leucine, D-allo-threonine, and L-proline, which is supported by the presence of epimerase domains in modules 1 and 3, which incorporate D-amino acids. The terminal module is responsible for incorporation of the two adjacent leucine units, where the epimerase domain is only used to convert the first unit to D-leucine. The terminal condensation domain (Ct) is involved in cyclization with D-alanine and thereby releasing of fusahexin. This Gibberella zeae (strain ATCC MYA-4620 / CBS 123657 / FGSC 9075 / NRRL 31084 / PH-1) (Wheat head blight fungus) protein is Nonribosomal peptide synthetase 4.